We begin with the raw amino-acid sequence, 217 residues long: Peptide deformylase 1 (217 aa).

Residues cysteine 129 and histidine 171 each coordinate Fe cation. The active site involves glutamate 172. Histidine 175 is a binding site for Fe cation.

This sequence belongs to the polypeptide deformylase family. It depends on Fe(2+) as a cofactor.

The enzyme catalyses N-terminal N-formyl-L-methionyl-[peptide] + H2O = N-terminal L-methionyl-[peptide] + formate. Its function is as follows. Removes the formyl group from the N-terminal Met of newly synthesized proteins. Requires at least a dipeptide for an efficient rate of reaction. N-terminal L-methionine is a prerequisite for activity but the enzyme has broad specificity at other positions. The protein is Peptide deformylase 1 of Bifidobacterium longum (strain NCC 2705).